The sequence spans 80 residues: Defensin-like protein 2 (80 aa).

An N-terminal signal peptide occupies residues 1–29 (MAKFASIIVLLFVALVVFAAFEEPTMVEA). Position 30 is a pyrrolidone carboxylic acid (Gln-30). Cystine bridges form between Cys-33/Cys-80, Cys-44/Cys-65, Cys-50/Cys-74, and Cys-54/Cys-76.

The protein belongs to the DEFL family.

The protein localises to the secreted. Its function is as follows. Possesses antifungal activity sensitive to inorganic cations. Induces potential changes in fungal membranes and increased K(+) efflux and Ca(2+) uptake. This chain is Defensin-like protein 2 (AFP2), found in Raphanus sativus (Radish).